Reading from the N-terminus, the 144-residue chain is Angiogenin-4 (144 aa).

The signal sequence occupies residues 1 to 24 (MTMSPCPLLLVFVLGLVVIPPTLA). His-36 (proton acceptor) is an active-site residue. Cystine bridges form between Cys-49–Cys-103, Cys-62–Cys-114, and Cys-80–Cys-129. A Nucleolar localization signal motif is present at residues 54-58 (KERKL). The Proton donor role is filled by His-136.

Belongs to the pancreatic ribonuclease family. In terms of tissue distribution, detected in small intestine, caecum and colon, with the highest expression in Paneth cells in the intestinal epithelium.

The protein resides in the secreted. It localises to the cytoplasmic vesicle. It is found in the secretory vesicle lumen. Its subcellular location is the nucleus. The protein localises to the nucleolus. Its function is as follows. Has bactericidal activity against E.faecalis and L.monocytogenes, but not against L.innocua and E.coli. Promotes angiogenesis (in vitro). Has low ribonuclease activity (in vitro). Promotes proliferation of melanoma cells, but not of endothelial cells or fibroblasts (in vitro). In Mus musculus (Mouse), this protein is Angiogenin-4 (Ang4).